The chain runs to 140 residues: Prepilin peptidase-dependent protein A (140 aa).

A propeptide spanning residues 1-23 (MLLLKASAICGKGNEGKRNKKGG) is cleaved from the precursor. Phe-24 is subject to N-methylphenylalanine. Residues 24-44 (FTLIELTVVLAIMAIILMVIA) form a helical membrane-spanning segment.

It localises to the membrane. Functionally, not yet known. The protein is Prepilin peptidase-dependent protein A (ppdA) of Clostridium perfringens (strain 13 / Type A).